The sequence spans 206 residues: Probable NAD(+) phosphorylase Rv3189 (206 aa).

This sequence belongs to the MbcT/ParT/Res family. In terms of assembly, forms a heterotetramer with cognate antitoxin Rv3188.

It catalyses the reaction phosphate + NAD(+) = ADP-alpha-D-ribose 1''-phosphate + nicotinamide + H(+). Probable toxic component of a type II toxin-antitoxin (TA) system. Degrades NAD(+) by phosphorolysis. Neutralized by its cognate antitoxin Rv3188. This chain is Probable NAD(+) phosphorylase Rv3189, found in Mycobacterium tuberculosis (strain ATCC 25618 / H37Rv).